The sequence spans 600 residues: Oligopeptide-binding protein OppA (600 aa).

An N-terminal signal peptide occupies residues 1 to 22 (MNKLKVTLLASSVVLAATLLSA). The N-palmitoyl cysteine moiety is linked to residue Cys-23. The S-diacylglycerol cysteine moiety is linked to residue Cys-23.

This sequence belongs to the bacterial solute-binding protein 5 family. In terms of assembly, the complex is composed of two ATP-binding proteins (OppD and OppF), two transmembrane proteins (OppB and OppC) and a solute-binding protein (OppA).

The protein resides in the cell membrane. Functionally, part of the ABC transporter complex OppABCDF involved in the uptake of oligopeptides. Essential for uptake of peptides larger than three amino acids and for growth in milk. The sequence is that of Oligopeptide-binding protein OppA from Lactococcus lactis subsp. lactis (Streptococcus lactis).